A 203-amino-acid polypeptide reads, in one-letter code: MNLIPMVVEQTPRGERSYDIYSRLLKERIIFLGSGVNDDVANVIVAQLLFLEAEDPEKDITFYINSPGGSVTAGMAIYDTMQYIKCDIATLCMGQAASMGAVLLAAGTAGKRYALPNSRIMIHQPLGGFQGQATDIEIHTKEILRIRKDLNNILAHHTGKTLKKIESDTERDNFMSSVEAQKYGLIDEVLVKREDVEGAADNG.

Serine 98 functions as the Nucleophile in the catalytic mechanism. Histidine 123 is a catalytic residue.

Belongs to the peptidase S14 family. As to quaternary structure, fourteen ClpP subunits assemble into 2 heptameric rings which stack back to back to give a disk-like structure with a central cavity, resembling the structure of eukaryotic proteasomes.

The protein localises to the cytoplasm. The enzyme catalyses Hydrolysis of proteins to small peptides in the presence of ATP and magnesium. alpha-casein is the usual test substrate. In the absence of ATP, only oligopeptides shorter than five residues are hydrolyzed (such as succinyl-Leu-Tyr-|-NHMec, and Leu-Tyr-Leu-|-Tyr-Trp, in which cleavage of the -Tyr-|-Leu- and -Tyr-|-Trp bonds also occurs).. Its function is as follows. Cleaves peptides in various proteins in a process that requires ATP hydrolysis. Has a chymotrypsin-like activity. Plays a major role in the degradation of misfolded proteins. The polypeptide is ATP-dependent Clp protease proteolytic subunit (Desulfotalea psychrophila (strain LSv54 / DSM 12343)).